Consider the following 382-residue polypeptide: Alanine racemase 1 (382 aa).

The active-site Proton acceptor; specific for D-alanine is lysine 39. Position 39 is an N6-(pyridoxal phosphate)lysine (lysine 39). Residue arginine 138 coordinates substrate. Residue tyrosine 265 is the Proton acceptor; specific for L-alanine of the active site. Methionine 312 contacts substrate.

It belongs to the alanine racemase family. The cofactor is pyridoxal 5'-phosphate.

The catalysed reaction is L-alanine = D-alanine. It functions in the pathway amino-acid biosynthesis; D-alanine biosynthesis; D-alanine from L-alanine: step 1/1. Its function is as follows. Catalyzes the interconversion of L-alanine and D-alanine. May also act on other amino acids. The sequence is that of Alanine racemase 1 (alr1) from Staphylococcus aureus (strain MRSA252).